Consider the following 240-residue polypeptide: Cysteine-rich venom protein (240 aa).

Positions M1–G19 are cleaved as a signal peptide. One can recognise an SCP domain in the interval D39–Y166. Disulfide bonds link C75/C153, C92/C167, C148/C164, C186/C193, C189/C198, C202/C235, C211/C229, and C220/C233. The ShKT domain maps to C202 to C235.

This sequence belongs to the CRISP family. Expressed by the venom gland.

It is found in the secreted. In terms of biological role, may block ryanodine receptors (RYR). This is Cysteine-rich venom protein from Protobothrops mucrosquamatus (Taiwan habu).